A 652-amino-acid chain; its full sequence is Oligopeptide-binding protein AliB (652 aa).

An N-terminal signal peptide occupies residues 1–24 (MKKSKSKYLTLAGLVLGTGVLLSA). The N-palmitoyl cysteine moiety is linked to residue Cys25. The S-diacylglycerol cysteine moiety is linked to residue Cys25.

The protein belongs to the bacterial solute-binding protein 5 family.

It is found in the cell membrane. Its function is as follows. Part of the binding-protein-dependent transport system for oligopeptides; probably an oligopeptide binding protein. This chain is Oligopeptide-binding protein AliB (aliB), found in Streptococcus pneumoniae serotype 4 (strain ATCC BAA-334 / TIGR4).